The primary structure comprises 757 residues: Alcohol dehydrogenase (quinone), dehydrogenase subunit (757 aa).

The first 34 residues, 1–34, serve as a signal peptide directing secretion; that stretch reads MTSGLLTPIKVTKKRLLSCAAALAFSAAVPVAFA. Pyrrolidone carboxylic acid is present on glutamine 35. Glutamate 95 provides a ligand contact to pyrroloquinoline quinone. Cysteine 141 and cysteine 142 form a disulfide bridge. Arginine 147 provides a ligand contact to pyrroloquinoline quinone. Residue glutamate 215 participates in Ca(2+) binding. Position 277 (threonine 277) interacts with pyrroloquinoline quinone. 2 residues coordinate Ca(2+): asparagine 297 and aspartate 342. Aspartate 342 serves as the catalytic Proton acceptor. Positions 369 and 588 each coordinate pyrroloquinoline quinone. The 80-residue stretch at 640–719 folds into the Cytochrome c domain; the sequence is ARQKDGYFMY…DIRNFIVKRA (80 aa). Residues cysteine 653, cysteine 656, histidine 657, and methionine 696 each contribute to the heme c site. Residues 726–757 are disordered; the sequence is EVKARENSTGVPNDQFLNVPQSTADVPTADHP. Over residues 732 to 750 the composition is skewed to polar residues; the sequence is NSTGVPNDQFLNVPQSTAD.

Belongs to the bacterial PQQ dehydrogenase family. As to quaternary structure, the alcohol dehydrogenase multicomponent enzyme system is composed of a dehydrogenase subunit I (AdhA), a cytochrome c subunit II (AdhB) and a subunit III (AdhS). The cofactor is pyrroloquinoline quinone. Requires Ca(2+) as cofactor. Heme c is required as a cofactor.

It is found in the cell membrane. It catalyses the reaction ethanol + a ubiquinone = a ubiquinol + acetaldehyde. With respect to regulation, 2,6-dichloro-4-dicyanovinylphenol (PC16) and antimycin A inhibit ubiquinol oxidation activity more selectively than the ubiquinone reductase activity. In terms of biological role, dehydrogenase component of the alcohol dehydrogenase multicomponent enzyme system which is involved in the production of acetic acid and in the ethanol oxidase respiratory chain. Quinohemoprotein alcohol dehydrogenase (ADH) catalyzes the oxidation of ethanol to acetaldehyde by transferring electrons to the ubiquinone embedded in the membrane phospholipids. The electrons transfer from ethanol to membranous ubiquinone occurs from pyrroloquinoline quinone (PQQ) to one heme c in subunit I (AdhA), and finally to two heme c in subunit II (AdhB). Besides ubiquinone reduction, ADH also has a ubiquinol (QH2) oxidation reaction which mediates electron transfer from ubiquinol to the non-energy generating bypass oxidase system. The electrons transfer occurs from ubiquinol (QH2) to the additional heme c within subunit II (AdhB). Also able to use quinone analogs such as 2,3-dimethoxy-5-methyl-6-n-decyl-1,4-benzoquinone (DB) and 2,3-dimethoxy-5-methyl-6-n-pentyl-1,4-benzoquinone (PB). The protein is Alcohol dehydrogenase (quinone), dehydrogenase subunit of Gluconobacter oxydans (strain 621H) (Gluconobacter suboxydans).